The chain runs to 391 residues: Chorismate synthase (391 aa).

Arg48 provides a ligand contact to NADP(+). FMN contacts are provided by residues 126–128, Gly286, 301–305, and Arg328; these read RAS and KPTSS.

This sequence belongs to the chorismate synthase family. FMNH2 is required as a cofactor.

The catalysed reaction is 5-O-(1-carboxyvinyl)-3-phosphoshikimate = chorismate + phosphate. Its pathway is metabolic intermediate biosynthesis; chorismate biosynthesis; chorismate from D-erythrose 4-phosphate and phosphoenolpyruvate: step 7/7. Catalyzes the anti-1,4-elimination of the C-3 phosphate and the C-6 proR hydrogen from 5-enolpyruvylshikimate-3-phosphate (EPSP) to yield chorismate, which is the branch point compound that serves as the starting substrate for the three terminal pathways of aromatic amino acid biosynthesis. This reaction introduces a second double bond into the aromatic ring system. The chain is Chorismate synthase from Saccharolobus islandicus (strain L.S.2.15 / Lassen #1) (Sulfolobus islandicus).